The primary structure comprises 1010 residues: Outer kinetochore KNL1 complex subunit knl-1 (1010 aa).

9 repeat units span residues 85-88 (MDIS), 109-112 (MDMS), 228-231 (MDTS), 255-258 (MDIT), 278-281 (MDIS), 323-326 (MDIT), 346-349 (MDIS), 402-405 (MDIT), and 428-431 (MDIS). The tract at residues 85 to 431 (MDISESPACT…LQKEDLMDIS (347 aa)) is 9 X 4 AA repeats of M-[D/E]-[I/L/M]-[S/T]. Coiled-coil stretches lie at residues 820–915 (RIVE…GLDK) and 956–988 (KALR…KFAQ).

Component of the KNL1 complex composed of knl-1 and kbp-5. Part of the ten-subunit outer kinetochore KMN network that includes the KNL1, MIS12 and NDC80 complexes. Interacts with the protein phosphatase 1 (PP1) catalytic subunit gsp-1; the interaction is direct. Interacts with the protein phosphatase 1 (PP1) catalytic subunit gsp-2; the interaction is direct. Interacts with the MIS12 complex subunits kbp-1, kbp-2 and mis-12. Interacts with the NDC80 complex components ndc-80 and him-10. Interacts with knl-3. Interacts with kbp-3. Interacts with kbp-4. Interacts with kbp-5.

The protein resides in the cytoplasm. The protein localises to the cell cortex. It is found in the chromosome. It localises to the centromere. Its subcellular location is the kinetochore. Its function is as follows. Acts as a component of the outer kinetochore KNL1 complex that serves as a docking point for spindle assembly checkpoint components and mediates microtubule-kinetochore interactions. Kinetochores, consisting of a centromere-associated inner segment and a microtubule-contacting outer segment, play a crucial role in chromosome segregation by mediating the physical connection between centromeric DNA and spindle microtubules. The outer kinetochore is made up of the ten-subunit KMN network, comprising the MIS12, NDC80 and KNL1 complexes, and auxiliary microtubule-associated components; together they connect the outer kinetochore with the inner kinetochore, bind microtubules, and mediate interactions with mitotic checkpoint proteins that delay anaphase until chromosomes are bioriented on the spindle. Binds the protein phosphatase 1 catalytic subunits gsp-1 and gsp-2, which has a role in delaying formation of load-bearing kinetochore-microtubule attachments. Required for the recruitment of spindle-assembly checkpoint components bub-1 and mdf-1/2 to unattached kinetochores. Binds microtubules which plays a role in silencing of the spindle assembly checkpoint, but not the formation of load-bearing microtubule-kinetochore attachments. Has a role in the correct localization of the spindly-like protein spdl-1 and the RZZ complex that is composed of rod-1, czw-1 and zwl-1 to kinetochores. The polypeptide is Outer kinetochore KNL1 complex subunit knl-1 (knl-1) (Caenorhabditis elegans).